The primary structure comprises 280 residues: 4-deoxy-L-threo-5-hexosulose-uronate ketol-isomerase (280 aa).

Positions 198, 200, 205, and 247 each coordinate Zn(2+).

It belongs to the KduI family. Requires Zn(2+) as cofactor.

It carries out the reaction 5-dehydro-4-deoxy-D-glucuronate = 3-deoxy-D-glycero-2,5-hexodiulosonate. The protein operates within glycan metabolism; pectin degradation; 2-dehydro-3-deoxy-D-gluconate from pectin: step 4/5. Its function is as follows. Catalyzes the isomerization of 5-dehydro-4-deoxy-D-glucuronate to 3-deoxy-D-glycero-2,5-hexodiulosonate. The polypeptide is 4-deoxy-L-threo-5-hexosulose-uronate ketol-isomerase (Bacteroides fragilis (strain ATCC 25285 / DSM 2151 / CCUG 4856 / JCM 11019 / LMG 10263 / NCTC 9343 / Onslow / VPI 2553 / EN-2)).